The sequence spans 90 residues: Bombyxin B-12 (90 aa).

A signal peptide spans 1–20 (MMKTTIMFMLVVVISLTYSS). Disulfide bonds link Cys-30–Cys-76, Cys-42–Cys-89, and Cys-75–Cys-80. Residues 49–67 (SGAQYAPYFWTRQYLGSRG) constitute a propeptide, c peptide like.

This sequence belongs to the insulin family. In terms of assembly, heterodimer of a B chain and an A chain linked by two disulfide bonds.

Its subcellular location is the secreted. Its function is as follows. Brain peptide responsible for activation of prothoracic glands to produce ecdysone in insects. The sequence is that of Bombyxin B-12 (BBXB12) from Bombyx mori (Silk moth).